Consider the following 608-residue polypeptide: 1-phosphatidylinositol 4,5-bisphosphate phosphodiesterase zeta-1 (608 aa).

In terms of domain architecture, EF-hand spans 35-70 (CSYIHVKQIFKDNDRLKQGRITIEEFRAIYRIITHR). The PI-PLC X-box domain occupies 155 to 299 (QDMTHPLNDY…LKFKILVKNK (145 aa)). Residues histidine 170 and histidine 215 contribute to the active site. The disordered stretch occupies residues 305–324 (KETHERKGSDKRGDNQDKET). The PI-PLC Y-box domain maps to 349–465 (LSDLVIYTKA…GYILKPHFLR (117 aa)). In terms of domain architecture, C2 spans 465–589 (RESKSYFNPS…KGYRRIPLFS (125 aa)).

As to quaternary structure, interacts via its C2 domain with PtdIns(3)P and, to a lesser extent, PtdIns(5)P in vitro. Requires Ca(2+) as cofactor. As to expression, expressed specifically in testis and sperm. Weakly expressed in pancreatic-duct cells. Up-regulated in pancreatic-duct cells from patients with cystic fibrosis.

It localises to the nucleus. Its subcellular location is the cytoplasm. It is found in the perinuclear region. The enzyme catalyses a 1,2-diacyl-sn-glycero-3-phospho-(1D-myo-inositol-4,5-bisphosphate) + H2O = 1D-myo-inositol 1,4,5-trisphosphate + a 1,2-diacyl-sn-glycerol + H(+). Its function is as follows. The production of the second messenger molecules diacylglycerol (DAG) and inositol 1,4,5-trisphosphate (IP3) is mediated by activated phosphatidylinositol-specific phospholipase C enzymes. In vitro, hydrolyzes PtdIns(4,5)P2 in a Ca(2+)-dependent manner. Triggers intracellular Ca(2+) oscillations in oocytes solely during M phase and is involved in inducing oocyte activation and initiating embryonic development up to the blastocyst stage. Is therefore a strong candidate for the egg-activating soluble sperm factor that is transferred from the sperm into the egg cytoplasm following gamete membrane fusion. May exert an inhibitory effect on phospholipase-C-coupled processes that depend on calcium ions and protein kinase C, including CFTR trafficking and function. The sequence is that of 1-phosphatidylinositol 4,5-bisphosphate phosphodiesterase zeta-1 from Homo sapiens (Human).